A 527-amino-acid chain; its full sequence is MKAESGQTSRRILCVFPRYTKSFGTFQHSYPLMDDVAAFMPPQGLLVIAAYLPDEWSVRFVDENIRAATADDFAWADAVFVSGMHIQRQQMNDICRRAHDFDLPVALGGPSVSACPDYYPNFDYLHVGELGDATDQLIAKLTHDVTRPKRQVVFTTEDRLDMTLFPIPAYELAECSKYLLGSIQYSSGCPYQCEFCDIPGLYGRNPRLKTPEQIITELDRMIECGIRGSVYFVDDNFIGNRKAALDLLPHLVEWQKRTGFQLQLACEATLNIAKRPEILELMREAYFCTIFVGIETPDPTALKAMHKDHNMMVPILEGVRTISSYGIEVVSGIILGLDTDTPETGEFLMQFIEQSQIPLLTINLLQALPKTPLWDRLQREGRLVHDDNRESNVDFLLPHDQVVAMWKDCMARAYQPEALLKRYDYQIAHAYATRLHPSTPQRASKANIKRGMIMLRNIIWQIGIRGDYKLAFWKFALRRLIRGDIENLLLVMVVAHHLIIYAREASRGHANASNYSIRLREAAVPAE.

In terms of domain architecture, B12-binding spans 36 to 148 (VAAFMPPQGL…AKLTHDVTRP (113 aa)). Positions 173-408 (AECSKYLLGS…HDQVVAMWKD (236 aa)) constitute a Radical SAM core domain. The [4Fe-4S] cluster site is built by C189, C193, and C196.

It belongs to the radical SAM superfamily. [4Fe-4S] cluster serves as cofactor.

Its function is as follows. Required for methylation of hopanoids at the C-2 position. The polypeptide is Hopanoid C-2 methylase (Rhodopseudomonas palustris (strain TIE-1)).